We begin with the raw amino-acid sequence, 105 residues long: Large ribosomal subunit protein uL18c (105 aa).

It belongs to the universal ribosomal protein uL18 family. Part of the 50S ribosomal subunit; contacts the 5S rRNA.

It is found in the plastid. The protein resides in the chloroplast. Binds 5S rRNA, forms part of the central protuberance of the 50S subunit. The polypeptide is Large ribosomal subunit protein uL18c (rpl18) (Gracilaria tenuistipitata var. liui (Red alga)).